The following is a 1338-amino-acid chain: Serine/threonine-protein kinase cek1 (1338 aa).

Positions 28–98 (SKDENLQPSI…RAVNCLLKDD (71 aa)) constitute a PAS domain. The interval 484–554 (PDFAIGSPMS…GRSSLFSRGR (71 aa)) is disordered. Polar residues predominate over residues 491 to 501 (PMSQDSSNYSS). Serine 525 bears the Phosphoserine mark. The span at 541-550 (PASNGRSSLF) shows a compositional bias: polar residues. Positions 589–958 (YKILKPISKG…VEEIKAHPFF (370 aa)) constitute a Protein kinase domain. ATP-binding positions include 595 to 603 (ISKGAFGSV) and lysine 618. Aspartate 713 (proton acceptor) is an active-site residue. Serine 748 carries the phosphoserine modification. The span at 813–842 (ENSAEDSPTATNTPTSQVDESNIFRSTDSP) shows a compositional bias: polar residues. Disordered stretches follow at residues 813-844 (ENSA…SPRV), 1010-1035 (KLEE…LRSN), and 1159-1185 (SSTM…TSSD). In terms of domain architecture, AGC-kinase C-terminal spans 959 to 1057 (KSVNWDTILE…RNLDFLNKAN (99 aa)). Residues 1159 to 1174 (SSTMSASQSQSSMHTA) are compositionally biased toward low complexity. The residue at position 1211 (serine 1211) is a Phosphoserine.

The protein belongs to the protein kinase superfamily. Ser/Thr protein kinase family.

The catalysed reaction is L-seryl-[protein] + ATP = O-phospho-L-seryl-[protein] + ADP + H(+). It carries out the reaction L-threonyl-[protein] + ATP = O-phospho-L-threonyl-[protein] + ADP + H(+). May facilitate the progression of anaphase through direct or indirect interaction with the cut8 protein. The polypeptide is Serine/threonine-protein kinase cek1 (cek1) (Schizosaccharomyces pombe (strain 972 / ATCC 24843) (Fission yeast)).